The following is a 130-amino-acid chain: Large ribosomal subunit protein uL22 (130 aa).

Belongs to the universal ribosomal protein uL22 family. In terms of assembly, part of the 50S ribosomal subunit.

In terms of biological role, this protein binds specifically to 23S rRNA; its binding is stimulated by other ribosomal proteins, e.g. L4, L17, and L20. It is important during the early stages of 50S assembly. It makes multiple contacts with different domains of the 23S rRNA in the assembled 50S subunit and ribosome. Its function is as follows. The globular domain of the protein is located near the polypeptide exit tunnel on the outside of the subunit, while an extended beta-hairpin is found that lines the wall of the exit tunnel in the center of the 70S ribosome. The polypeptide is Large ribosomal subunit protein uL22 (Clavibacter michiganensis subsp. michiganensis (strain NCPPB 382)).